Consider the following 199-residue polypeptide: uncharacterized protein (199 aa).

Residues Glu72–Glu116 adopt a coiled-coil conformation. Residues Thr98 to Gly117 show a composition bias toward basic and acidic residues. Residues Thr98–Tyr127 are disordered.

This is an uncharacterized protein from Caenorhabditis elegans.